Here is a 914-residue protein sequence, read N- to C-terminus: MTAENTPLQGNLFVESEENLLDANSLQNTNSVKDSNLNDEELSKNAELRPRKRKKSVLLQNSVGEQTEDFSNDERPAWSHHSLVEINELTPVLRHYVELKQKHPERILLYRLGDFFECFFEDAIGLSELLELTLTGKEGGKKIGRVPMAGIPHHAAERYCSTLIQKGLSVAICDQLESIQNKEGKLLKRGITRILTPGTVLEEGMLQAKKNNWLAAILIESNSQTNQLKWGLASADISTGEFTVKEGNGIDTLEQDLLNIEASEIICEQLDVDISKKWQSNRIKITQQSKTSFSLQEAKAILKKHYNLKTINGLGLNETELALRAAGGLLYYLKETNPIHNIGVKNKCSKVVLDFPKNNLRGDSLIIDAQTRRNLELTKTQKDGHFQGSLLCAIDRTLTAMGGRCLRRWIENPLINSELILQRQRLITLLVEKRPLRKALRNLLRTMGDIERLSGRASAGQAGARELVAIADCLEKLPKLAANLQNLSINPPKWFSKLENINPELTKLAEEIKDKLIDNPPLSITEGNLINDSVDKILDGLRNQLDDQNEWLSNQEKKERNISGNNNLKLQHHRTFGYFLAVSKSKANTVPDHWIRRQTLANEERFVTPALKERESKIFQLKVKAANREYDLFCALRELVGGYAPIIRETAKAIAGLDVLLGLAELASTNNYCAPNIIDKKSLSNSRSINIKGCRHPVVEQMLVEEKFQANDIELGDGVDLIILTGPNASGKSCYLRQIGLIQILSQIGSWIPADKASISIADRVFTRVGAVDDLAAGQSTFMVEMAETAFILNQATQDSIVLLDEIGRGTSTFDGLSIAWSVSEFLAENIKSRTIFATHYHELNELAKKMGNVANFQVLVHETGEDIHFLHQVIPGGSNRSYGIEAARLAGVPKSVINRARGVLKRLEEKNKG.

Positions 28-74 are disordered; sequence NTNSVKDSNLNDEELSKNAELRPRKRKKSVLLQNSVGEQTEDFSNDE. 726–733 provides a ligand contact to ATP; it reads GPNASGKS.

Belongs to the DNA mismatch repair MutS family.

Functionally, this protein is involved in the repair of mismatches in DNA. It is possible that it carries out the mismatch recognition step. This protein has a weak ATPase activity. The protein is DNA mismatch repair protein MutS of Prochlorococcus marinus (strain SARG / CCMP1375 / SS120).